The following is a 342-amino-acid chain: NADH-quinone oxidoreductase subunit H (342 aa).

8 consecutive transmembrane segments (helical) span residues L15–A35, V86–V106, V119–G139, V159–L179, H190–A210, F251–I271, V277–V297, and V316–G336.

Belongs to the complex I subunit 1 family. As to quaternary structure, NDH-1 is composed of 14 different subunits. Subunits NuoA, H, J, K, L, M, N constitute the membrane sector of the complex.

The protein localises to the cell inner membrane. The enzyme catalyses a quinone + NADH + 5 H(+)(in) = a quinol + NAD(+) + 4 H(+)(out). NDH-1 shuttles electrons from NADH, via FMN and iron-sulfur (Fe-S) centers, to quinones in the respiratory chain. The immediate electron acceptor for the enzyme in this species is believed to be ubiquinone. Couples the redox reaction to proton translocation (for every two electrons transferred, four hydrogen ions are translocated across the cytoplasmic membrane), and thus conserves the redox energy in a proton gradient. This subunit may bind ubiquinone. The chain is NADH-quinone oxidoreductase subunit H from Granulibacter bethesdensis (strain ATCC BAA-1260 / CGDNIH1).